A 515-amino-acid polypeptide reads, in one-letter code: Maturase K (515 aa).

Belongs to the intron maturase 2 family. MatK subfamily.

The protein resides in the plastid. The protein localises to the chloroplast. Its function is as follows. Usually encoded in the trnK tRNA gene intron. Probably assists in splicing its own and other chloroplast group II introns. In Cedrus atlantica (Atlas cedar), this protein is Maturase K.